The sequence spans 216 residues: Phosphoserine phosphatase (216 aa).

The Nucleophile role is filled by aspartate 10. Residues aspartate 10 and aspartate 12 each coordinate Mg(2+). Aspartate 12 (proton donor) is an active-site residue. Substrate-binding positions include glutamate 19, arginine 55, 98–99 (SG), and lysine 143. Aspartate 166 contacts Mg(2+). Asparagine 169 provides a ligand contact to substrate.

This sequence belongs to the HAD-like hydrolase superfamily. SerB family. The cofactor is Mg(2+).

The enzyme catalyses O-phospho-L-serine + H2O = L-serine + phosphate. It carries out the reaction O-phospho-D-serine + H2O = D-serine + phosphate. It functions in the pathway amino-acid biosynthesis; L-serine biosynthesis; L-serine from 3-phospho-D-glycerate: step 3/3. The sequence is that of Phosphoserine phosphatase from Lactococcus lactis subsp. lactis (strain IL1403) (Streptococcus lactis).